Reading from the N-terminus, the 469-residue chain is MPREILTVSAGQAGNQIGSEFWSQLCAEHGISKEGVLEDWATDMTDRKDVFFYQADDEHYIPRAVMIDLEPRVLDSIKSGPYKNLYNPENFFYDPQGGGAGNNWAKGYAAGERVYEEVMEMIDREAEGSDSLEGFMLLHSIAGGTGSGLGSYLLERMNDRYPKKLIQTYSVFPDADSGDVVVQPYNSLLSMKRLTNHADSVIVLDNAALSKICQDRLHVQVASFAQTNQLVSTVMSASTQTLRYPGYMNNDLVGMIASLIPTPRCHFLTTSYTPFTSDKIEQAKAVRKTTVLDVMRRLLQPKNRLVSMPTTPSRHACYISILNIIQGEVDPTDVHKSLLRIRERNSATFIPWGPASIQVALTKQSPYVQTTHKVSGLMLANHTNIASIFKRTVAQYDQLRKRNAFMPQYQKEAMFEKNLDEFDEARATVQDLIEEYQACEKADYIDYGAGPGYVKGEDRREKGREAVEG.

GTP is bound at residue 142 to 148 (AGGTGSG).

The protein belongs to the tubulin family.

It is found in the cytoplasm. It localises to the cytoskeleton. Its subcellular location is the microtubule organizing center. The protein localises to the spindle pole body. Tubulin is the major constituent of microtubules. The gamma chain is found at microtubule organizing centers (MTOC) such as the spindle poles or the centrosome, suggesting that it is involved in the minus-end nucleation of microtubule assembly. In Microbotryum violaceum (Anther smut fungus), this protein is Tubulin gamma chain (TUB4).